We begin with the raw amino-acid sequence, 157 residues long: Protein MG115 homolog (157 aa).

Belongs to the CinA family.

This is Protein MG115 homolog from Mycoplasma pneumoniae (strain ATCC 29342 / M129 / Subtype 1) (Mycoplasmoides pneumoniae).